A 556-amino-acid polypeptide reads, in one-letter code: Arginine--tRNA ligase (556 aa).

Positions 134–144 match the 'HIGH' region motif; sequence ANPTGPLHIGH.

The protein belongs to the class-I aminoacyl-tRNA synthetase family. Monomer.

The protein resides in the cytoplasm. It carries out the reaction tRNA(Arg) + L-arginine + ATP = L-arginyl-tRNA(Arg) + AMP + diphosphate. This is Arginine--tRNA ligase from Micrococcus luteus (strain ATCC 4698 / DSM 20030 / JCM 1464 / CCM 169 / CCUG 5858 / IAM 1056 / NBRC 3333 / NCIMB 9278 / NCTC 2665 / VKM Ac-2230) (Micrococcus lysodeikticus).